The following is a 425-amino-acid chain: Light-independent protochlorophyllide reductase subunit N (425 aa).

[4Fe-4S] cluster is bound by residues cysteine 17, cysteine 42, and cysteine 103.

This sequence belongs to the BchN/ChlN family. In terms of assembly, protochlorophyllide reductase is composed of three subunits; ChlL, ChlN and ChlB. Forms a heterotetramer of two ChlB and two ChlN subunits. Requires [4Fe-4S] cluster as cofactor.

The catalysed reaction is chlorophyllide a + oxidized 2[4Fe-4S]-[ferredoxin] + 2 ADP + 2 phosphate = protochlorophyllide a + reduced 2[4Fe-4S]-[ferredoxin] + 2 ATP + 2 H2O. Its pathway is porphyrin-containing compound metabolism; chlorophyll biosynthesis (light-independent). Functionally, component of the dark-operative protochlorophyllide reductase (DPOR) that uses Mg-ATP and reduced ferredoxin to reduce ring D of protochlorophyllide (Pchlide) to form chlorophyllide a (Chlide). This reaction is light-independent. The NB-protein (ChlN-ChlB) is the catalytic component of the complex. In Parasynechococcus marenigrum (strain WH8102), this protein is Light-independent protochlorophyllide reductase subunit N.